We begin with the raw amino-acid sequence, 286 residues long: Cytochrome c oxidase subunit 3 (286 aa).

Transmembrane regions (helical) follow at residues 13 to 33 (GVFL…GVVI), 40 to 60 (VGTF…CFLI), 85 to 105 (IIQY…VVFF), 133 to 153 (IILD…NIIL), 173 to 195 (LCRE…LLFI), 199 to 221 (VWEF…LFSI), 223 to 243 (TLHF…IFNI), and 253 to 273 (IVLI…WFFL).

This sequence belongs to the cytochrome c oxidase subunit 3 family. As to quaternary structure, component of the cytochrome c oxidase (complex IV, CIV), a multisubunit enzyme composed of a catalytic core of 3 subunits and several supernumerary subunits. The complex exists as a monomer or a dimer and forms supercomplexes (SCs) in the inner mitochondrial membrane with ubiquinol-cytochrome c oxidoreductase (cytochrome b-c1 complex, complex III, CIII).

It is found in the mitochondrion inner membrane. It carries out the reaction 4 Fe(II)-[cytochrome c] + O2 + 8 H(+)(in) = 4 Fe(III)-[cytochrome c] + 2 H2O + 4 H(+)(out). Its function is as follows. Component of the cytochrome c oxidase, the last enzyme in the mitochondrial electron transport chain which drives oxidative phosphorylation. The respiratory chain contains 3 multisubunit complexes succinate dehydrogenase (complex II, CII), ubiquinol-cytochrome c oxidoreductase (cytochrome b-c1 complex, complex III, CIII) and cytochrome c oxidase (complex IV, CIV), that cooperate to transfer electrons derived from NADH and succinate to molecular oxygen, creating an electrochemical gradient over the inner membrane that drives transmembrane transport and the ATP synthase. Cytochrome c oxidase is the component of the respiratory chain that catalyzes the reduction of oxygen to water. Electrons originating from reduced cytochrome c in the intermembrane space (IMS) are transferred via the dinuclear copper A center (CU(A)) of subunit 2 and heme A of subunit 1 to the active site in subunit 1, a binuclear center (BNC) formed by heme A3 and copper B (CU(B)). The BNC reduces molecular oxygen to 2 water molecules using 4 electrons from cytochrome c in the IMS and 4 protons from the mitochondrial matrix. The chain is Cytochrome c oxidase subunit 3 (COIII) from Trypanoplasma borreli.